The following is a 380-amino-acid chain: Phosphate acyltransferase (380 aa).

Residues 1 to 23 form a disordered region; it reads MPSPPPTPETATASDRTATPAPG.

It belongs to the PlsX family. In terms of assembly, homodimer. Probably interacts with PlsY.

Its subcellular location is the cytoplasm. The enzyme catalyses a fatty acyl-[ACP] + phosphate = an acyl phosphate + holo-[ACP]. Its pathway is lipid metabolism; phospholipid metabolism. Its function is as follows. Catalyzes the reversible formation of acyl-phosphate (acyl-PO(4)) from acyl-[acyl-carrier-protein] (acyl-ACP). This enzyme utilizes acyl-ACP as fatty acyl donor, but not acyl-CoA. The chain is Phosphate acyltransferase from Acidiphilium cryptum (strain JF-5).